A 367-amino-acid polypeptide reads, in one-letter code: BTB/POZ domain-containing protein Tiwaz (367 aa).

Disordered regions lie at residues 16 to 46 and 62 to 87; these read LTVD…PRDL and SSPT…SSVT. Residues 28–45 are compositionally biased toward basic and acidic residues; that stretch reads CDMDRERERDVKALEPRD. One can recognise a BTB domain in the interval 135-205; it reads APVHIDVGGT…MRNSRLLIAE (71 aa). Residues 240 to 261 are disordered; it reads GNYLVAPPTPPARHIKTSPRTS.

In terms of biological role, functions with the transcription factor TfAP-2 to regulate octopamine neuronal signaling pathways that control behaviors such as male aggression, male mating, and the initiation of feeding. Required for TfAP-2 transcriptional activity in octopaminergic neurons. Functions with TfAP-2 to regulate expression of genes which are involved in promoting octopamine production and secretion from octopaminergic neurons, such as Tbh and Vmat. Octopamine then modulates feeding and male aggression by regulating the expression of the satiation hormone Dsk in insulin-producing cells (IPCs). Functions with octopamine and Dsk as part of a negative feedback loop to prevent overeating; acts with TfAP-2 to regulate octopamine signaling pathways that initiate feeding, then octopamine activates expression of Dsk which inhibits consummatory behavior. May also be involved in negatively regulating nociception in larvae to prevent spontaneous pain and hyperalgesia. This is BTB/POZ domain-containing protein Tiwaz from Drosophila melanogaster (Fruit fly).